The chain runs to 755 residues: Serine/threonine-protein kinase GA29083 (755 aa).

The span at 18–52 (QASASGSGTPKKTAASSAAAQNSKQLLDQLSQQQK) shows a compositional bias: low complexity. Residues 18–128 (QASASGSGTP…GSANTNGSAS (111 aa)) are disordered. Composition is skewed to basic and acidic residues over residues 53–66 (AQEE…RDCD) and 74–84 (EPEKDLDELRD). Over residues 87 to 99 (GSLTGSGSVGKSN) the composition is skewed to polar residues. The segment covering 100–128 (GSLSGASSTTSAPAGTSTPGSANTNGSAS) has biased composition (low complexity). Doublecortin domains follow at residues 157–243 (HRIK…VDYN) and 314–397 (RIVT…VEDF). The region spanning 484-742 (YTLSQIIGDG…SEDILDHYWT (259 aa)) is the Protein kinase domain. ATP is bound by residues 490 to 498 (IGDGNFAIV) and lysine 513. The active-site Proton acceptor is aspartate 605.

The protein belongs to the protein kinase superfamily. CAMK Ser/Thr protein kinase family. CaMK subfamily.

It carries out the reaction L-seryl-[protein] + ATP = O-phospho-L-seryl-[protein] + ADP + H(+). The catalysed reaction is L-threonyl-[protein] + ATP = O-phospho-L-threonyl-[protein] + ADP + H(+). This Drosophila pseudoobscura pseudoobscura (Fruit fly) protein is Serine/threonine-protein kinase GA29083.